The primary structure comprises 459 residues: uncharacterized protein (459 aa).

Residues 9–67 (KLEVGQTFPVTIKRLGINGEGVGYFKRQVVFIPGALPGEEVVAETTKIQRGFAEAKVKK) enclose the TRAM domain. C80, C86, C89, and C168 together coordinate [4Fe-4S] cluster. Residues Q292, Y321, D342, and D390 each contribute to the S-adenosyl-L-methionine site. C417 acts as the Nucleophile in catalysis.

The protein belongs to the class I-like SAM-binding methyltransferase superfamily. RNA M5U methyltransferase family.

This is an uncharacterized protein from Bacillus anthracis.